The following is a 382-amino-acid chain: Lipid-A-disaccharide synthase (382 aa).

This sequence belongs to the LpxB family.

It carries out the reaction a lipid X + a UDP-2-N,3-O-bis[(3R)-3-hydroxyacyl]-alpha-D-glucosamine = a lipid A disaccharide + UDP + H(+). Its pathway is bacterial outer membrane biogenesis; LPS lipid A biosynthesis. In terms of biological role, condensation of UDP-2,3-diacylglucosamine and 2,3-diacylglucosamine-1-phosphate to form lipid A disaccharide, a precursor of lipid A, a phosphorylated glycolipid that anchors the lipopolysaccharide to the outer membrane of the cell. The chain is Lipid-A-disaccharide synthase from Koribacter versatilis (strain Ellin345).